A 338-amino-acid polypeptide reads, in one-letter code: Heat-inducible transcription repressor HrcA (338 aa).

Belongs to the HrcA family.

Functionally, negative regulator of class I heat shock genes (grpE-dnaK-dnaJ and groELS operons). Prevents heat-shock induction of these operons. This Bacillus cereus (strain ATCC 10987 / NRS 248) protein is Heat-inducible transcription repressor HrcA.